Consider the following 366-residue polypeptide: tRNA/tmRNA (uracil-C(5))-methyltransferase (366 aa).

S-adenosyl-L-methionine-binding residues include Q190, Y218, N223, E239, and D299. C324 functions as the Nucleophile in the catalytic mechanism. Residue E358 is the Proton acceptor of the active site.

It belongs to the class I-like SAM-binding methyltransferase superfamily. RNA M5U methyltransferase family. TrmA subfamily.

It carries out the reaction uridine(54) in tRNA + S-adenosyl-L-methionine = 5-methyluridine(54) in tRNA + S-adenosyl-L-homocysteine + H(+). It catalyses the reaction uridine(341) in tmRNA + S-adenosyl-L-methionine = 5-methyluridine(341) in tmRNA + S-adenosyl-L-homocysteine + H(+). Dual-specificity methyltransferase that catalyzes the formation of 5-methyluridine at position 54 (m5U54) in all tRNAs, and that of position 341 (m5U341) in tmRNA (transfer-mRNA). This Salmonella paratyphi A (strain ATCC 9150 / SARB42) protein is tRNA/tmRNA (uracil-C(5))-methyltransferase.